The primary structure comprises 250 residues: Large ribosomal subunit protein uL29m (250 aa).

The residue at position 144 (Lys144) is an N6-acetyllysine.

It belongs to the universal ribosomal protein uL29 family. Component of the mitochondrial large ribosomal subunit (mt-LSU). Mature mammalian 55S mitochondrial ribosomes consist of a small (28S) and a large (39S) subunit. The 28S small subunit contains a 12S ribosomal RNA (12S mt-rRNA) and 30 different proteins. The 39S large subunit contains a 16S rRNA (16S mt-rRNA), a copy of mitochondrial valine transfer RNA (mt-tRNA(Val)), which plays an integral structural role, and 52 different proteins.

It is found in the mitochondrion. The chain is Large ribosomal subunit protein uL29m (MRPL47) from Homo sapiens (Human).